The sequence spans 481 residues: F-box/LRR-repeat protein At3g03360 (481 aa).

The tract at residues 1–28 (MEKESQENSTRPDASSTVFSSSKSTCAS) is disordered. Positions 14-28 (ASSTVFSSSKSTCAS) are enriched in low complexity. One can recognise an F-box domain in the interval 36–84 (GDLISRLPDDILQLILSYLPTRLAIKTSVLSRRWRHVWSDTWSLSFHRD). LRR repeat units follow at residues 118–145 (SRPDTHADIDSWINFAMSRNVENLSLYL), 196–221 (HCNISDESIAIILSGCPILESLLLFF), 295–320 (EADFHQTMVVKMLEKCQNVEKLTLGA), 350–375 (ISRYVIHGIVKVLQNSPDLKKLTIHP), and 413–439 (RRNVESKQVASFLQLVLKTISTLELIV).

The chain is F-box/LRR-repeat protein At3g03360 from Arabidopsis thaliana (Mouse-ear cress).